The chain runs to 486 residues: NADH-quinone oxidoreductase subunit N (486 aa).

Helical transmembrane passes span A11–V31, M44–L64, P74–A94, F103–V123, M128–L148, F163–G183, V206–F226, P238–I258, P267–G287, M300–T320, M328–L348, Y371–F391, V404–Y424, and L452–Y472.

This sequence belongs to the complex I subunit 2 family. In terms of assembly, NDH-1 is composed of 14 different subunits. Subunits NuoA, H, J, K, L, M, N constitute the membrane sector of the complex.

The protein resides in the cell inner membrane. It catalyses the reaction a quinone + NADH + 5 H(+)(in) = a quinol + NAD(+) + 4 H(+)(out). In terms of biological role, NDH-1 shuttles electrons from NADH, via FMN and iron-sulfur (Fe-S) centers, to quinones in the respiratory chain. The immediate electron acceptor for the enzyme in this species is believed to be ubiquinone. Couples the redox reaction to proton translocation (for every two electrons transferred, four hydrogen ions are translocated across the cytoplasmic membrane), and thus conserves the redox energy in a proton gradient. The chain is NADH-quinone oxidoreductase subunit N from Laribacter hongkongensis (strain HLHK9).